A 55-amino-acid polypeptide reads, in one-letter code: Transcriptional regulator CdrS (55 aa).

The protein belongs to the CdrS family.

It is found in the cytoplasm. Functionally, transcriptional regulator which plays a central role in the regulation of cell division. Activates the expression of the gene encoding the cell division protein FtsZ2, and of other genes encoding proteins predicted to function in critical aspects of cell division. Required for normal cell division but not for cell elongation. May act during the transition from stasis to growth. The CdrSL-FtsZ2 transcriptional network might coordinate cell division timing with cell growth. This chain is Transcriptional regulator CdrS, found in Halobacterium salinarum (strain ATCC 700922 / JCM 11081 / NRC-1) (Halobacterium halobium).